Here is a 231-residue protein sequence, read N- to C-terminus: 26S proteasome non-ATPase regulatory subunit 10 (231 aa).

ANK repeat units lie at residues 3 to 36 (GCVS…ATRT), 37 to 69 (DQDS…VNDK), 70 to 102 (DDAG…VNAV), 103 to 135 (NQNG…PDAK), 136 to 168 (DHYD…TNIQ), 169 to 201 (DTEG…IYIE), and 202 to 226 (NKEE…LAES).

As to quaternary structure, part of transient complex containing PSMD10, PSMC4, PSMC5 and PAAF1 formed during the assembly of the 26S proteasome. Stays associated throughout the assembly of the PA700/19S RC and is released upon association with the 20S core. Interacts with PSMC4. Interacts with RB1. Interacts with CDK4. Interacts with MDM2. Interacts with RELA. Associates with a CDK4:CCND2 serine/threonine kinase complex. Interacts with ARHGDIA and increases the interaction between ARHGDIA and RHOA, hence promotes ARHGDIA inactivation of RHOA and ROCK.

Its subcellular location is the cytoplasm. It is found in the nucleus. In terms of biological role, acts as a chaperone during the assembly of the 26S proteasome, specifically of the PA700/19S regulatory complex (RC). In the initial step of the base subcomplex assembly is part of an intermediate PSMD10:PSMC4:PSMC5:PAAF1 module which probably assembles with a PSMD5:PSMC2:PSMC1:PSMD2 module. Independently of the proteasome, regulates EGF-induced AKT activation through inhibition of the RHOA/ROCK/PTEN pathway, leading to prolonged AKT activation. Plays an important role in RAS-induced tumorigenesis. Acts as an oncoprotein by being involved in negative regulation of tumor suppressors RB1 and p53/TP53. Overexpression is leading to phosphorylation of RB1 and proteasomal degradation of RB1. Regulates CDK4-mediated phosphorylation of RB1 by competing with CDKN2A for binding with CDK4. Facilitates binding of MDM2 to p53/TP53 and the mono- and polyubiquitination of p53/TP53 by MDM2 suggesting a function in targeting the TP53:MDM2 complex to the 26S proteasome. Involved in p53-independent apoptosis. Involved in regulation of NF-kappa-B by retaining it in the cytoplasm. Binds to the NF-kappa-B component RELA and accelerates its XPO1/CRM1-mediated nuclear export. In Mus musculus (Mouse), this protein is 26S proteasome non-ATPase regulatory subunit 10 (Psmd10).